Reading from the N-terminus, the 101-residue chain is Large ribosomal subunit protein uL24 (101 aa).

It belongs to the universal ribosomal protein uL24 family. Part of the 50S ribosomal subunit.

Functionally, one of two assembly initiator proteins, it binds directly to the 5'-end of the 23S rRNA, where it nucleates assembly of the 50S subunit. One of the proteins that surrounds the polypeptide exit tunnel on the outside of the subunit. This chain is Large ribosomal subunit protein uL24, found in Dinoroseobacter shibae (strain DSM 16493 / NCIMB 14021 / DFL 12).